A 389-amino-acid chain; its full sequence is Trans-2-enoyl-CoA reductase [NADH] (389 aa).

NAD(+) contacts are provided by residues 47–52 (GASTGY), 73–74 (FE), 110–111 (DA), and 138–139 (LA). Residue Y224 participates in substrate binding. Y234 serves as the catalytic Proton donor. Residues K243 and 272 to 274 (LVT) each bind NAD(+).

It belongs to the TER reductase family. In terms of assembly, monomer.

It catalyses the reaction a 2,3-saturated acyl-CoA + NAD(+) = a (2E)-enoyl-CoA + NADH + H(+). It participates in lipid metabolism; fatty acid biosynthesis. In terms of biological role, involved in the fatty acid synthesis (FAS II). Catalyzes the reduction of a carbon-carbon double bond in an enoyl moiety that is covalently linked to a coenzyme A (CoA). This Clostridium perfringens (strain ATCC 13124 / DSM 756 / JCM 1290 / NCIMB 6125 / NCTC 8237 / Type A) protein is Trans-2-enoyl-CoA reductase [NADH].